Here is a 943-residue protein sequence, read N- to C-terminus: Tyrosine-protein kinase transmembrane receptor ROR2 (943 aa).

The N-terminal stretch at 1-33 (MARGSALPRRPLLCIPAVWAAAALLLSVSRTSG) is a signal peptide. The Extracellular segment spans residues 34–403 (EVEVLDPNDP…CSPRDSSKMG (370 aa)). One can recognise an Ig-like C2-type domain in the interval 55-145 (PTLKGYFLNF…VATNGMKTIT (91 aa)). Asn70 is a glycosylation site (N-linked (GlcNAc...) asparagine). Cystine bridges form between Cys83/Cys135, Cys174/Cys239, Cys182/Cys232, Cys223/Cys264, Cys252/Cys300, Cys256/Cys286, Cys316/Cys394, Cys337/Cys377, and Cys365/Cys389. In terms of domain architecture, FZ spans 169 to 303 (HEDGFCQPYR…SPDAANCMRI (135 aa)). N-linked (GlcNAc...) asparagine glycosylation is present at Asn188. In terms of domain architecture, Kringle spans 316 to 394 (CYNGSGMDYR…RMELCDVPSC (79 aa)). Asn318 carries an N-linked (GlcNAc...) asparagine glycan. The chain crosses the membrane as a helical span at residues 404–424 (ILYILVPSIAIPLVIACLFFL). Residues 425-943 (VCMCRNKQKA…VDEAQVQLEA (519 aa)) are Cytoplasmic-facing. Sulfoserine; partial occurs at positions 469 and 471. A Protein kinase domain is found at 473–746 (VRFMEELGED…PRFKDIHSRL (274 aa)). Residues 479–487 (LGEDRFGKV) and Lys507 each bind ATP. Catalysis depends on Asp615, which acts as the Proton acceptor. At Tyr646 the chain carries Phosphotyrosine; by autocatalysis. Disordered stretches follow at residues 757 to 796 (SSAQ…APPF) and 850 to 931 (QVPP…DCDT). Low complexity-rich tracts occupy residues 765–791 (SNTT…GPKQ) and 857–872 (PKPS…TSTG). The residue at position 785 (Arg785) is an Asymmetric dimethylarginine. Polar residues predominate over residues 873-883 (YVTTAPSNTSM).

It belongs to the protein kinase superfamily. Tyr protein kinase family. ROR subfamily. As to quaternary structure, homodimer; promotes osteogenesis. Binds YWHAB. Interacts with WTIP. Interacts with ROR2. Requires Mg(2+) as cofactor.

It localises to the cell membrane. The enzyme catalyses L-tyrosyl-[protein] + ATP = O-phospho-L-tyrosyl-[protein] + ADP + H(+). Its function is as follows. Tyrosine-protein kinase receptor which may be involved in the early formation of the chondrocytes. It seems to be required for cartilage and growth plate development. Phosphorylates YWHAB, leading to induction of osteogenesis and bone formation. In contrast, has also been shown to have very little tyrosine kinase activity in vitro. May act as a receptor for wnt ligand WNT5A which may result in the inhibition of WNT3A-mediated signaling. This Homo sapiens (Human) protein is Tyrosine-protein kinase transmembrane receptor ROR2 (ROR2).